The chain runs to 406 residues: MSQPITRENFDEWMLPVYAPAPFIPVRGEGSRLWDQQGKEYIDFAGGIAVNALGHAHPELREALNEQASKFWHTGNGYTNEPVLRLAKKLIDATFADRVFFCNSGAEANEAALKLARKFAHDRYGSHKSGIVAFKNAFHGRTLFTVSAGGQPAYSQDFAPLPPDIRHAAYNDLNSASALIDDSTCAVIVEPIQGEGGVVPASNAFLQGLRELCDRHNALLIFDEVQTGVGRTGELYAYMHYGVTPDLLTTAKALGGGFPVGALLATEECASVMTVGTHGTTYGGNPLASAVAGKVLDLINTPEMLIGVKQRHDWFVERLNTINHRYGLFSEVRGLGLLIGCVLNADYAGQAKQISQEAAKAGVMVLIAGGNVVRFAPALNVSEEEVTTGLDRFAVACERFVSGGSS.

An N6-(pyridoxal phosphate)lysine modification is found at Lys252.

This sequence belongs to the class-III pyridoxal-phosphate-dependent aminotransferase family. AstC subfamily. Pyridoxal 5'-phosphate is required as a cofactor.

The catalysed reaction is N(2)-succinyl-L-ornithine + 2-oxoglutarate = N-succinyl-L-glutamate 5-semialdehyde + L-glutamate. The protein operates within amino-acid degradation; L-arginine degradation via AST pathway; L-glutamate and succinate from L-arginine: step 3/5. Functionally, catalyzes the transamination of N(2)-succinylornithine and alpha-ketoglutarate into N(2)-succinylglutamate semialdehyde and glutamate. Can also act as an acetylornithine aminotransferase. The polypeptide is Succinylornithine transaminase (Escherichia fergusonii (strain ATCC 35469 / DSM 13698 / CCUG 18766 / IAM 14443 / JCM 21226 / LMG 7866 / NBRC 102419 / NCTC 12128 / CDC 0568-73)).